The following is a 357-amino-acid chain: Spore wall and anchoring disk complex protein EnP1 (357 aa).

A signal peptide spans 1–16 (MKLLGFLIVGLSAISA). N-linked (GlcNAc...) asparagine glycosylation occurs at asparagine 47. The HBM1 signature appears at 150 to 158 (ERRPHYKKI). Positions 329–334 (LKKVRG) match the HBM2 motif.

It localises to the spore wall. The protein localises to the spore. It is found in the perispore. Functionally, spore wall protein involved in the adhesion to host cells surface glycoaminoglycans (GAGs). Microsporidian spore adherence is an integral part of activation and host cell invasion which requires the extrusion at the spore apex of a very long and coiled structure, the polar tube, through which the sporoplasm is pushed to enter into the potential host cell. The protein is Spore wall and anchoring disk complex protein EnP1 (EnP1) of Encephalitozoon cuniculi (strain GB-M1) (Microsporidian parasite).